A 335-amino-acid polypeptide reads, in one-letter code: MKRIAVLTSGGDAPGMNAAIRAVVRQAISEGMEVFGIYDGYAGMVAGEIHPLDAASVGDIISRGGTFLHSARYPEFAQLEGQLKGIEQLKKHGIEGVVVIGGDGSYHGAMRLTEHGFPAIGLPGTIDNDIVGTDFTIGFDTAVTTAMDAIDKIRDTSSSHRRTFVIEVMGRNAGDIALWAGIATGADEIIIPEAGFKMEDIVASIKAGYECGKKHNIIVLAEGVMSAAEFGQKLKEAGDTSDLRVTELGHIQRGGSPTARDRVLASRMGTHAVKLLKEGIGGVAVGIRNEKMVENPILGTAEEGALFSLTAEGKIVVNNPHKADIELSSLNKSLS.

Gly11 is an ATP binding site. ADP is bound at residue 21–25 (RAVVR). ATP contacts are provided by residues 72–73 (RY) and 102–105 (GDGS). Mg(2+) is bound at residue Asp103. 125-127 (TID) contributes to the substrate binding site. The active-site Proton acceptor is the Asp127. Arg154 provides a ligand contact to ADP. Substrate contacts are provided by residues Arg162 and 169–171 (MGR). ADP-binding positions include 185–187 (GAD) and 213–215 (KKH). Substrate contacts are provided by residues Glu222, Arg244, and 250 to 253 (HIQR).

It belongs to the phosphofructokinase type A (PFKA) family. ATP-dependent PFK group I subfamily. Prokaryotic clade 'B1' sub-subfamily. In terms of assembly, homotetramer. The cofactor is Mg(2+).

Its subcellular location is the cytoplasm. It carries out the reaction beta-D-fructose 6-phosphate + ATP = beta-D-fructose 1,6-bisphosphate + ADP + H(+). It functions in the pathway carbohydrate degradation; glycolysis; D-glyceraldehyde 3-phosphate and glycerone phosphate from D-glucose: step 3/4. Its activity is regulated as follows. Allosterically activated by ADP and other diphosphonucleosides, and allosterically inhibited by phosphoenolpyruvate. Functionally, catalyzes the phosphorylation of D-fructose 6-phosphate to fructose 1,6-bisphosphate by ATP, the first committing step of glycolysis. This chain is ATP-dependent 6-phosphofructokinase, found in Streptococcus pneumoniae (strain CGSP14).